The primary structure comprises 250 residues: L-ascorbate peroxidase, cytosolic (250 aa).

His42 acts as the Proton acceptor in catalysis. Positions 113-137 are disordered; sequence VPFHPGREDKPEPPPEGRLPDATKG. Positions 117–137 are enriched in basic and acidic residues; that stretch reads PGREDKPEPPPEGRLPDATKG. His163 contributes to the heme b binding site. 5 residues coordinate K(+): Thr164, Thr180, Asn182, Ile185, and Asp187.

It belongs to the peroxidase family. Ascorbate peroxidase subfamily. The cofactor is heme b.

Its subcellular location is the cytoplasm. It catalyses the reaction L-ascorbate + H2O2 = L-dehydroascorbate + 2 H2O. Its function is as follows. Plays a key role in hydrogen peroxide removal. The chain is L-ascorbate peroxidase, cytosolic (APX1) from Pisum sativum (Garden pea).